Consider the following 125-residue polypeptide: Small ribosomal subunit protein uS12 (125 aa).

At aspartate 89 the chain carries 3-methylthioaspartic acid.

The protein belongs to the universal ribosomal protein uS12 family. Part of the 30S ribosomal subunit. Contacts proteins S8 and S17. May interact with IF1 in the 30S initiation complex.

With S4 and S5 plays an important role in translational accuracy. Its function is as follows. Interacts with and stabilizes bases of the 16S rRNA that are involved in tRNA selection in the A site and with the mRNA backbone. Located at the interface of the 30S and 50S subunits, it traverses the body of the 30S subunit contacting proteins on the other side and probably holding the rRNA structure together. The combined cluster of proteins S8, S12 and S17 appears to hold together the shoulder and platform of the 30S subunit. The protein is Small ribosomal subunit protein uS12 of Wigglesworthia glossinidia brevipalpis.